Consider the following 140-residue polypeptide: Cysteine protease inhibitor 6 (140 aa).

The cysteines at positions 103 and 109 are disulfide-linked.

It belongs to the protease inhibitor I3 (leguminous Kunitz-type inhibitor) family.

Its subcellular location is the vacuole. Functionally, inhibitor of cysteine proteases. May protect the plant by inhibiting proteases of invading organisms. The chain is Cysteine protease inhibitor 6 from Solanum tuberosum (Potato).